The chain runs to 1066 residues: Exportin-T (1066 aa).

It belongs to the exportin family.

It localises to the nucleus. The protein localises to the cytoplasm. Functionally, tRNA nucleus export receptor which facilitates tRNA translocation across the nuclear pore complex. Involved in pre-tRNA splicing, probably by affecting the interaction of pre-tRNA with splicing endonuclease. This Laccaria bicolor (strain S238N-H82 / ATCC MYA-4686) (Bicoloured deceiver) protein is Exportin-T (LOS1).